The following is a 76-amino-acid chain: Bowman-Birk type proteinase inhibitor DE-3 (76 aa).

Intrachain disulfides connect Cys-16–Cys-70, Cys-17–Cys-32, Cys-20–Cys-66, Cys-22–Cys-30, Cys-40–Cys-47, Cys-44–Cys-59, and Cys-49–Cys-57.

This sequence belongs to the Bowman-Birk serine protease inhibitor family.

The polypeptide is Bowman-Birk type proteinase inhibitor DE-3 (Macrotyloma axillare (Perennial horse gram)).